The chain runs to 631 residues: Nucleoside triphosphatase I (631 aa).

One can recognise a Helicase ATP-binding domain in the interval 42-204 (FLGLDSMHSL…TMLVNLLRPG (163 aa)). 55–62 (HETGVGKT) provides a ligand contact to ATP. The short motif at 141 to 144 (DECH) is the DEXH box element. A Helicase C-terminal domain is found at 367-532 (KFIDVCLGIL…EFVQLFRVFK (166 aa)). The segment at 457 to 524 (DIFILDMTWN…EIIQSKSKEF (68 aa)) is binding to the cap-specific mRNA (nucleoside-2'-O-)-methyltransferase.

The protein belongs to the helicase family. NPH I subfamily. Monomer. Interacts (via C-terminus) with RAP94/OPG109 (via N-terminus). Interacts with the cap-specific mRNA (nucleoside-2'-O-)-methyltransferase OPG102.

Its subcellular location is the virion. It carries out the reaction a ribonucleoside 5'-triphosphate + H2O = a ribonucleoside 5'-diphosphate + phosphate + H(+). Its function is as follows. DNA-dependent ATPase that acts as a 5' to 3' translocase on single-stranded DNA and thereby plays a role in transcription termination of viral early genes. Uses forward translocation in concert with the viral RNA polymerase RAP94/OPG109 subunit and the capping enzyme/VTF to catalyze release of UUUUUNU-containing nascent RNA from the elongation complex. In addition, acts as a positive elongation factor to assist transcription through problematic sequences. The sequence is that of Nucleoside triphosphatase I (OPG123) from Variola virus (isolate Human/India/Ind3/1967) (VARV).